A 316-amino-acid chain; its full sequence is Secreted effector protein SifB (316 aa).

Belongs to the Sif family.

The protein resides in the secreted. The protein localises to the host cytoplasm. Functionally, effector proteins function to alter host cell physiology and promote bacterial survival in host tissues. This Salmonella typhimurium (strain LT2 / SGSC1412 / ATCC 700720) protein is Secreted effector protein SifB (sifB).